A 283-amino-acid chain; its full sequence is Polyamine aminopropyltransferase (283 aa).

The 234-residue stretch at 5–238 (QTWIDEYHKG…GIWSWTFASS (234 aa)) folds into the PABS domain. An S-methyl-5'-thioadenosine-binding site is contributed by Gln-32. 2 residues coordinate spermidine: His-63 and Asp-87. Residues Glu-107 and 139-140 (DG) contribute to the S-methyl-5'-thioadenosine site. The active-site Proton acceptor is the Asp-158. 158–161 (DCSD) provides a ligand contact to spermidine.

Belongs to the spermidine/spermine synthase family. In terms of assembly, homodimer or homotetramer.

It localises to the cytoplasm. The enzyme catalyses S-adenosyl 3-(methylsulfanyl)propylamine + putrescine = S-methyl-5'-thioadenosine + spermidine + H(+). It participates in amine and polyamine biosynthesis; spermidine biosynthesis; spermidine from putrescine: step 1/1. In terms of biological role, catalyzes the irreversible transfer of a propylamine group from the amino donor S-adenosylmethioninamine (decarboxy-AdoMet) to putrescine (1,4-diaminobutane) to yield spermidine. The polypeptide is Polyamine aminopropyltransferase (Prochlorococcus marinus (strain MIT 9301)).